Reading from the N-terminus, the 340-residue chain is Phospho-N-acetylmuramoyl-pentapeptide-transferase (340 aa).

The next 10 helical transmembrane spans lie at 5–25, 50–70, 73–93, 113–133, 147–167, 178–198, 218–238, 242–262, 267–287, and 318–338; these read FILS…HLIN, TPTM…IIWT, SNPY…IGFI, FSLL…IIND, IIFN…IGTS, GLAI…SFIS, LTII…FNTY, IFMG…ISVL, ILLI…IIQV, and IIRF…MLKV.

Belongs to the glycosyltransferase 4 family. MraY subfamily. Mg(2+) is required as a cofactor.

The protein resides in the cell membrane. The catalysed reaction is UDP-N-acetyl-alpha-D-muramoyl-L-alanyl-gamma-D-glutamyl-meso-2,6-diaminopimeloyl-D-alanyl-D-alanine + di-trans,octa-cis-undecaprenyl phosphate = di-trans,octa-cis-undecaprenyl diphospho-N-acetyl-alpha-D-muramoyl-L-alanyl-D-glutamyl-meso-2,6-diaminopimeloyl-D-alanyl-D-alanine + UMP. Its pathway is cell wall biogenesis; peptidoglycan biosynthesis. Functionally, catalyzes the initial step of the lipid cycle reactions in the biosynthesis of the cell wall peptidoglycan: transfers peptidoglycan precursor phospho-MurNAc-pentapeptide from UDP-MurNAc-pentapeptide onto the lipid carrier undecaprenyl phosphate, yielding undecaprenyl-pyrophosphoryl-MurNAc-pentapeptide, known as lipid I. The polypeptide is Phospho-N-acetylmuramoyl-pentapeptide-transferase (Buchnera aphidicola subsp. Baizongia pistaciae (strain Bp)).